Here is a 225-residue protein sequence, read N- to C-terminus: Leucyl/phenylalanyl-tRNA--protein transferase (225 aa).

Belongs to the L/F-transferase family.

The protein resides in the cytoplasm. It carries out the reaction N-terminal L-lysyl-[protein] + L-leucyl-tRNA(Leu) = N-terminal L-leucyl-L-lysyl-[protein] + tRNA(Leu) + H(+). It catalyses the reaction N-terminal L-arginyl-[protein] + L-leucyl-tRNA(Leu) = N-terminal L-leucyl-L-arginyl-[protein] + tRNA(Leu) + H(+). The enzyme catalyses L-phenylalanyl-tRNA(Phe) + an N-terminal L-alpha-aminoacyl-[protein] = an N-terminal L-phenylalanyl-L-alpha-aminoacyl-[protein] + tRNA(Phe). Its function is as follows. Functions in the N-end rule pathway of protein degradation where it conjugates Leu, Phe and, less efficiently, Met from aminoacyl-tRNAs to the N-termini of proteins containing an N-terminal arginine or lysine. The chain is Leucyl/phenylalanyl-tRNA--protein transferase from Gluconobacter oxydans (strain 621H) (Gluconobacter suboxydans).